Consider the following 492-residue polypeptide: Spore germination protein GerLA (492 aa).

The next 3 helical transmembrane spans lie at 295 to 315 (IIAVLLPAMYVALVSYHQGLI), 384 to 404 (FLVIIIAVTAIATFSLPVYSI), and 410 to 430 (ILLFVFVLAATAFGLYGIILA).

This sequence belongs to the GerABKA family.

The protein localises to the membrane. Its function is as follows. Contributes to the L-alanine germination response. This is Spore germination protein GerLA (gerLA) from Bacillus cereus.